We begin with the raw amino-acid sequence, 310 residues long: N-acetyl-gamma-glutamyl-phosphate reductase (310 aa).

Residue Cys-117 is part of the active site.

This sequence belongs to the NAGSA dehydrogenase family. Type 2 subfamily.

The protein resides in the cytoplasm. It carries out the reaction N-acetyl-L-glutamate 5-semialdehyde + phosphate + NADP(+) = N-acetyl-L-glutamyl 5-phosphate + NADPH + H(+). The protein operates within amino-acid biosynthesis; L-arginine biosynthesis; N(2)-acetyl-L-ornithine from L-glutamate: step 3/4. In terms of biological role, catalyzes the NADPH-dependent reduction of N-acetyl-5-glutamyl phosphate to yield N-acetyl-L-glutamate 5-semialdehyde. This Rhizobium leguminosarum bv. trifolii (strain WSM2304) protein is N-acetyl-gamma-glutamyl-phosphate reductase.